Here is a 651-residue protein sequence, read N- to C-terminus: Chaperone protein HtpG (651 aa).

Residues 1–353 (MAPHVEQLEF…AQDMSLNVSR (353 aa)) form an a; substrate-binding region. The tract at residues 354–569 (EILQQDRQIR…TFGITPALAR (216 aa)) is b. The interval 570–651 (MYRASGQPVP…RLTRMVGEQS (82 aa)) is c.

Belongs to the heat shock protein 90 family. In terms of assembly, homodimer.

The protein localises to the cytoplasm. Its function is as follows. Molecular chaperone. Has ATPase activity. This Mycolicibacterium gilvum (strain PYR-GCK) (Mycobacterium gilvum (strain PYR-GCK)) protein is Chaperone protein HtpG.